The primary structure comprises 245 residues: tRNA1(Val) (adenine(37)-N6)-methyltransferase (245 aa).

Belongs to the methyltransferase superfamily. tRNA (adenine-N(6)-)-methyltransferase family.

It localises to the cytoplasm. It carries out the reaction adenosine(37) in tRNA1(Val) + S-adenosyl-L-methionine = N(6)-methyladenosine(37) in tRNA1(Val) + S-adenosyl-L-homocysteine + H(+). In terms of biological role, specifically methylates the adenine in position 37 of tRNA(1)(Val) (anticodon cmo5UAC). The chain is tRNA1(Val) (adenine(37)-N6)-methyltransferase from Escherichia coli O6:K15:H31 (strain 536 / UPEC).